The primary structure comprises 514 residues: Serine/threonine-protein kinase 33 (514 aa).

Positions Ile65 to Ala86 are enriched in basic and acidic residues. Residues Ile65–Trp91 form a disordered region. Residues Tyr116–Leu381 enclose the Protein kinase domain. Residues Leu122–Val130 and Lys145 contribute to the ATP site. Residue Asp238 is the Proton acceptor of the active site. Disordered stretches follow at residues Lys402–Ser468 and Met485–Leu514. Residue Ser407 is modified to Phosphoserine. Over residues Thr413–Lys426 the composition is skewed to basic and acidic residues. Residues Ser449–Ser468 are compositionally biased toward polar residues.

It belongs to the protein kinase superfamily. CAMK Ser/Thr protein kinase family. CaMK subfamily. As to quaternary structure, homodimer. Post-translationally, autophosphorylated. In terms of tissue distribution, highly expressed in testis, fetal lung and heart, followed by pituitary gland, kidney, interventricular septum, pancreas, heart, trachea, thyroid gland and uterus. Weak hybridization signals were observed in the following tissues: amygdala, aorta, esophagus, colon ascending, colon transverse, skeletal muscle, spleen, peripheral blood leukocyte, lymph node, bone marrow, placenta, prostate, liver, salivary gland, mammary gland, some tumor cell lines, fetal brain, fetal liver, fetal spleen and fetal thymus. No signal at all was detectable in RNA from tissues of the nervous system.

It is found in the cytoplasm. The protein resides in the cytoskeleton. It localises to the perinuclear region. It carries out the reaction L-seryl-[protein] + ATP = O-phospho-L-seryl-[protein] + ADP + H(+). The enzyme catalyses L-threonyl-[protein] + ATP = O-phospho-L-threonyl-[protein] + ADP + H(+). With respect to regulation, specifically inhibited by CDD-2807 ((3-([1,1'-Biphenyl]-2-ylethynyl)-1H-indazol-5-yl)(2,6-diazaspiro[3.5]nonan-2-yl)methanone). Serine/threonine protein kinase required for spermatid differentiation and male fertility. Promotes sperm flagella assembly during spermatogenesis by mediating phosphorylation of fibrous sheath proteins AKAP3 and AKAP4. Also phosphorylates vimentin/VIM, thereby regulating the dynamic behavior of the intermediate filament cytoskeleton. The polypeptide is Serine/threonine-protein kinase 33 (Homo sapiens (Human)).